Reading from the N-terminus, the 130-residue chain is Small ribosomal subunit protein uS9 (130 aa).

A disordered region spans residues glycine 102 to arginine 130. Residues lysine 111 to arginine 130 show a composition bias toward basic residues.

Belongs to the universal ribosomal protein uS9 family.

This chain is Small ribosomal subunit protein uS9, found in Finegoldia magna (strain ATCC 29328 / DSM 20472 / WAL 2508) (Peptostreptococcus magnus).